A 141-amino-acid chain; its full sequence is uncharacterized protein (141 aa).

Residues 10–117 form the HIT domain; the sequence is IFCDIVQGSI…VPKYETGKGF (108 aa). A Histidine triad motif motif is present at residues 102–106; that stretch reads HFHLH.

This is an uncharacterized protein from Mycoplasma genitalium (strain ATCC 33530 / DSM 19775 / NCTC 10195 / G37) (Mycoplasmoides genitalium).